The sequence spans 410 residues: Chorismate synthase (410 aa).

Residues arginine 43 and arginine 49 each contribute to the NADP(+) site. FMN-binding positions include 143–145 (RSS), 264–265 (QA), glycine 308, 323–327 (KPIST), and arginine 349.

Belongs to the chorismate synthase family. In terms of assembly, homotetramer. FMNH2 serves as cofactor.

It catalyses the reaction 5-O-(1-carboxyvinyl)-3-phosphoshikimate = chorismate + phosphate. The protein operates within metabolic intermediate biosynthesis; chorismate biosynthesis; chorismate from D-erythrose 4-phosphate and phosphoenolpyruvate: step 7/7. Catalyzes the anti-1,4-elimination of the C-3 phosphate and the C-6 proR hydrogen from 5-enolpyruvylshikimate-3-phosphate (EPSP) to yield chorismate, which is the branch point compound that serves as the starting substrate for the three terminal pathways of aromatic amino acid biosynthesis. This reaction introduces a second double bond into the aromatic ring system. In Corynebacterium glutamicum (strain ATCC 13032 / DSM 20300 / JCM 1318 / BCRC 11384 / CCUG 27702 / LMG 3730 / NBRC 12168 / NCIMB 10025 / NRRL B-2784 / 534), this protein is Chorismate synthase.